We begin with the raw amino-acid sequence, 262 residues long: Hydroxyethylthiazole kinase (262 aa).

Methionine 39 contributes to the substrate binding site. Residues lysine 115 and threonine 160 each coordinate ATP. Glycine 187 lines the substrate pocket.

Belongs to the Thz kinase family. It depends on Mg(2+) as a cofactor.

The enzyme catalyses 5-(2-hydroxyethyl)-4-methylthiazole + ATP = 4-methyl-5-(2-phosphooxyethyl)-thiazole + ADP + H(+). It participates in cofactor biosynthesis; thiamine diphosphate biosynthesis; 4-methyl-5-(2-phosphoethyl)-thiazole from 5-(2-hydroxyethyl)-4-methylthiazole: step 1/1. Catalyzes the phosphorylation of the hydroxyl group of 4-methyl-5-beta-hydroxyethylthiazole (THZ). This is Hydroxyethylthiazole kinase from Staphylococcus epidermidis (strain ATCC 12228 / FDA PCI 1200).